A 536-amino-acid chain; its full sequence is Glycine--tRNA ligase (536 aa).

An insert region spans residues 56–67 (LVSPAGAPSTFE). Positions 106 and 213 each coordinate substrate. Residues 245 to 247 (RNE), 255 to 260 (FRSREF), and 333 to 334 (EL) contribute to the ATP site. 260 to 264 (FEQME) contacts substrate. An insert region spans residues 350 to 372 (EGKLDPATNPMTVELNEHGKPKH). Residue 396–400 (EPSAG) participates in substrate binding. 400–403 (GADR) is a binding site for ATP.

Belongs to the class-II aminoacyl-tRNA synthetase family. In terms of assembly, homodimer.

It is found in the cytoplasm. It catalyses the reaction tRNA(Gly) + glycine + ATP = glycyl-tRNA(Gly) + AMP + diphosphate. In terms of biological role, catalyzes the attachment of glycine to tRNA(Gly). This is Glycine--tRNA ligase from Rhodopirellula baltica (strain DSM 10527 / NCIMB 13988 / SH1).